A 100-amino-acid polypeptide reads, in one-letter code: Urease subunit gamma (100 aa).

It belongs to the urease gamma subunit family. In terms of assembly, heterotrimer of UreA (gamma), UreB (beta) and UreC (alpha) subunits. Three heterotrimers associate to form the active enzyme.

Its subcellular location is the cytoplasm. The enzyme catalyses urea + 2 H2O + H(+) = hydrogencarbonate + 2 NH4(+). It functions in the pathway nitrogen metabolism; urea degradation; CO(2) and NH(3) from urea (urease route): step 1/1. This Prochlorococcus marinus (strain MIT 9303) protein is Urease subunit gamma.